We begin with the raw amino-acid sequence, 126 residues long: Large ribosomal subunit protein bL12 (126 aa).

This sequence belongs to the bacterial ribosomal protein bL12 family. Homodimer. Part of the ribosomal stalk of the 50S ribosomal subunit. Forms a multimeric L10(L12)X complex, where L10 forms an elongated spine to which 2 to 4 L12 dimers bind in a sequential fashion. Binds GTP-bound translation factors.

Functionally, forms part of the ribosomal stalk which helps the ribosome interact with GTP-bound translation factors. Is thus essential for accurate translation. The chain is Large ribosomal subunit protein bL12 from Desulfatibacillum aliphaticivorans.